A 436-amino-acid chain; its full sequence is APO protein 1, chloroplastic (436 aa).

Residues 1 to 47 (MLLVSPACRGVYLQTIDPKPIDFSARASYALCFQIPTSIPKRECLMR) constitute a chloroplast transit peptide. APO domains follow at residues 155-240 (ACSE…EIPE) and 329-414 (ACGY…RVPQ).

The protein belongs to the APO family. Expressed at low level. Expressed at higher level in leaves. Expressed at lower level in roots, stems, siliques and flowers.

The protein resides in the plastid. Its subcellular location is the chloroplast. Functionally, involved in the stable assembly of several 4Fe-4S cluster-containing complexes of chloroplasts. May participate in 4Fe-4S cofactor incorporation into psaA and/or psaB during translation. In Arabidopsis thaliana (Mouse-ear cress), this protein is APO protein 1, chloroplastic (APO1).